A 175-amino-acid polypeptide reads, in one-letter code: ATP synthase subunit delta (175 aa).

Belongs to the ATPase delta chain family. F-type ATPases have 2 components, F(1) - the catalytic core - and F(0) - the membrane proton channel. F(1) has five subunits: alpha(3), beta(3), gamma(1), delta(1), epsilon(1). F(0) has three main subunits: a(1), b(2) and c(10-14). The alpha and beta chains form an alternating ring which encloses part of the gamma chain. F(1) is attached to F(0) by a central stalk formed by the gamma and epsilon chains, while a peripheral stalk is formed by the delta and b chains.

It is found in the cell inner membrane. F(1)F(0) ATP synthase produces ATP from ADP in the presence of a proton or sodium gradient. F-type ATPases consist of two structural domains, F(1) containing the extramembraneous catalytic core and F(0) containing the membrane proton channel, linked together by a central stalk and a peripheral stalk. During catalysis, ATP synthesis in the catalytic domain of F(1) is coupled via a rotary mechanism of the central stalk subunits to proton translocation. Its function is as follows. This protein is part of the stalk that links CF(0) to CF(1). It either transmits conformational changes from CF(0) to CF(1) or is implicated in proton conduction. This Sulfurovum sp. (strain NBC37-1) protein is ATP synthase subunit delta.